A 212-amino-acid chain; its full sequence is uncharacterized protein (212 aa).

Pentapeptide repeat domains lie at 63–102 (VSFR…KMVG), 103–142 (MNVA…ALMQ), and 143–182 (SECS…RFEQ).

This is an uncharacterized protein from Bacillus subtilis (strain 168).